A 468-amino-acid polypeptide reads, in one-letter code: ATP synthase subunit beta (468 aa).

155-162 (GGAGVGKT) serves as a coordination point for ATP.

The protein belongs to the ATPase alpha/beta chains family. As to quaternary structure, F-type ATPases have 2 components, CF(1) - the catalytic core - and CF(0) - the membrane proton channel. CF(1) has five subunits: alpha(3), beta(3), gamma(1), delta(1), epsilon(1). CF(0) has three main subunits: a(1), b(2) and c(9-12). The alpha and beta chains form an alternating ring which encloses part of the gamma chain. CF(1) is attached to CF(0) by a central stalk formed by the gamma and epsilon chains, while a peripheral stalk is formed by the delta and b chains.

The protein resides in the cell membrane. It catalyses the reaction ATP + H2O + 4 H(+)(in) = ADP + phosphate + 5 H(+)(out). Functionally, produces ATP from ADP in the presence of a proton gradient across the membrane. The catalytic sites are hosted primarily by the beta subunits. The protein is ATP synthase subunit beta of Streptococcus suis (strain 98HAH33).